A 678-amino-acid polypeptide reads, in one-letter code: Dol-P-Man:Man(7)GlcNAc(2)-PP-Dol alpha-1,6-mannosyltransferase (678 aa).

The next 11 membrane-spanning stretches (helical) occupy residues 1–21, 56–76, 81–101, 109–129, 133–153, 168–188, 200–220, 252–272, 279–299, 301–321, and 334–354; these read MDILIFVTAAAHLVYTPFTKV, FIGPLVVSIISAPFVLLFETL, FWAQYVVRLVLAGAISVAWNS, IYGVEVRLWFTAITITQFHFM, TRPLPNIFALPIVLFAIAYWL, ILVFRSELALFLGILLVVSLL, VALPAGVCILAATVLVDSFFW, FYSALPRAMGASLVLVPIGVA, PLVLSALLFVLLYSILPHKEL, FIIYVFPVLNIAAACACQRIW, and ALACGAHLLLNVFITLFLLVI.

Belongs to the glycosyltransferase 22 family.

The protein resides in the endoplasmic reticulum membrane. It carries out the reaction an alpha-D-Man-(1-&gt;2)-alpha-D-Man-(1-&gt;2)-alpha-D-Man-(1-&gt;3)-[alpha-D-Man-(1-&gt;2)-alpha-D-Man-(1-&gt;3)-alpha-D-Man-(1-&gt;6)]-beta-D-Man-(1-&gt;4)-beta-D-GlcNAc-(1-&gt;4)-alpha-D-GlcNAc-diphospho-di-trans,poly-cis-dolichol + a di-trans,poly-cis-dolichyl beta-D-mannosyl phosphate = an alpha-D-Man-(1-&gt;2)-alpha-D-Man-(1-&gt;2)-alpha-D-Man-(1-&gt;3)-[alpha-D-Man-(1-&gt;2)-alpha-D-Man-(1-&gt;3)-[alpha-D-Man-(1-&gt;6)]-alpha-D-Man-(1-&gt;6)]-beta-D-Man-(1-&gt;4)-beta-D-GlcNAc-(1-&gt;4)-alpha-D-GlcNAc-diphospho-di-trans,poly-cis-dolichol + a di-trans,poly-cis-dolichyl phosphate + H(+). It participates in protein modification; protein glycosylation. Its function is as follows. Mannosyltransferase that operates in the biosynthetic pathway of dolichol-linked oligosaccharides, the glycan precursors employed in protein asparagine (N)-glycosylation. The assembly of dolichol-linked oligosaccharides begins on the cytosolic side of the endoplasmic reticulum membrane and finishes in its lumen. The sequential addition of sugars to dolichol pyrophosphate produces dolichol-linked oligosaccharides containing fourteen sugars, including two GlcNAcs, nine mannoses and three glucoses. Once assembled, the oligosaccharide is transferred from the lipid to nascent proteins by oligosaccharyltransferases. In the lumen of the endoplasmic reticulum, adds the eighth mannose residue in an alpha-1,6 linkage onto Man(7)GlcNAc(2)-PP-dolichol to produce Man(8)GlcNAc(2)-PP-dolichol. The protein is Dol-P-Man:Man(7)GlcNAc(2)-PP-Dol alpha-1,6-mannosyltransferase of Drosophila melanogaster (Fruit fly).